The sequence spans 179 residues: MANLKERYQNEVAAQLQEQFSYANVMQIPRITKVTLNMGIGDATSDKKLIDNAMGDLEKLSGQRPVITKARKSIAGFKVREGWPIGIKVTLRSERMWDFLDRLVNIAIPRVRDFRGLNPKSFDGRGNYSMGVREQIIFPELEYDKIDRIRGLDVTITTTANTDEEGRALLSALNFPFKK.

This sequence belongs to the universal ribosomal protein uL5 family. As to quaternary structure, part of the 50S ribosomal subunit; part of the 5S rRNA/L5/L18/L25 subcomplex. Contacts the 5S rRNA and the P site tRNA. Forms a bridge to the 30S subunit in the 70S ribosome.

Functionally, this is one of the proteins that bind and probably mediate the attachment of the 5S RNA into the large ribosomal subunit, where it forms part of the central protuberance. In the 70S ribosome it contacts protein S13 of the 30S subunit (bridge B1b), connecting the 2 subunits; this bridge is implicated in subunit movement. Contacts the P site tRNA; the 5S rRNA and some of its associated proteins might help stabilize positioning of ribosome-bound tRNAs. The polypeptide is Large ribosomal subunit protein uL5 (Chromohalobacter salexigens (strain ATCC BAA-138 / DSM 3043 / CIP 106854 / NCIMB 13768 / 1H11)).